The chain runs to 175 residues: Hypoxanthine-guanine phosphoribosyltransferase (175 aa).

Residues lysine 40 and glycine 41 each coordinate diphosphate. The Mg(2+) site is built by glutamate 96 and aspartate 97. The active-site Proton acceptor is the aspartate 100. GMP contacts are provided by residues lysine 128, 149-150 (FL), and aspartate 156. Arginine 162 contacts diphosphate.

It belongs to the purine/pyrimidine phosphoribosyltransferase family. Mg(2+) serves as cofactor.

The protein localises to the cytoplasm. It carries out the reaction IMP + diphosphate = hypoxanthine + 5-phospho-alpha-D-ribose 1-diphosphate. The enzyme catalyses GMP + diphosphate = guanine + 5-phospho-alpha-D-ribose 1-diphosphate. Its pathway is purine metabolism; IMP biosynthesis via salvage pathway; IMP from hypoxanthine: step 1/1. It participates in purine metabolism; GMP biosynthesis via salvage pathway; GMP from guanine: step 1/1. Functionally, purine salvage pathway enzyme that catalyzes the transfer of the ribosyl-5-phosphate group from 5-phospho-alpha-D-ribose 1-diphosphate (PRPP) to the N9 position of the 6-oxopurines hypoxanthine and guanine to form the corresponding ribonucleotides IMP (inosine 5'-monophosphate) and GMP (guanosine 5'-monophosphate), with the release of PPi. This Mycoplasma pneumoniae (strain ATCC 29342 / M129 / Subtype 1) (Mycoplasmoides pneumoniae) protein is Hypoxanthine-guanine phosphoribosyltransferase (hpt).